The primary structure comprises 687 residues: Epithelial splicing regulatory protein 1 (687 aa).

3 consecutive RRM domains span residues 226–303, 327–407, and 446–526; these read TIIR…KATG, VIVR…RSTA, and DCIR…QCSA.

It belongs to the ESRP family.

It is found in the nucleus. Functionally, mRNA splicing factor that regulates the formation of epithelial cell-specific isoforms. Specifically regulates the expression of FGFR2-IIIb, an epithelial cell-specific isoform of fgfr2. Acts by directly binding specific sequences in mRNAs. Binds the GU-rich sequence motifs in the ISE/ISS-3, a cis-element regulatory region present in the mRNA of fgfr2. In Xenopus tropicalis (Western clawed frog), this protein is Epithelial splicing regulatory protein 1 (esrp1).